Here is a 433-residue protein sequence, read N- to C-terminus: Aspartate--tRNA(Asp/Asn) ligase (433 aa).

Glu167 serves as a coordination point for L-aspartate. The interval 189 to 192 (QLFK) is aspartate. Residue Arg211 participates in L-aspartate binding. Residues 211-213 (RAE), 219-221 (RHL), and Glu356 contribute to the ATP site. Mg(2+) contacts are provided by Glu356 and Ser359. The L-aspartate site is built by Ser359 and Arg363. 404 to 407 (GGER) is a binding site for ATP.

It belongs to the class-II aminoacyl-tRNA synthetase family. Type 2 subfamily. In terms of assembly, homodimer. The cofactor is Mg(2+).

The protein resides in the cytoplasm. It catalyses the reaction tRNA(Asx) + L-aspartate + ATP = L-aspartyl-tRNA(Asx) + AMP + diphosphate. Aspartyl-tRNA synthetase with relaxed tRNA specificity since it is able to aspartylate not only its cognate tRNA(Asp) but also tRNA(Asn). Reaction proceeds in two steps: L-aspartate is first activated by ATP to form Asp-AMP and then transferred to the acceptor end of tRNA(Asp/Asn). The sequence is that of Aspartate--tRNA(Asp/Asn) ligase from Haloferax volcanii (Halobacterium volcanii).